A 269-amino-acid chain; its full sequence is UPF0761 membrane protein HI_0276 (269 aa).

6 helical membrane-spanning segments follow: residues 32-52 (MLAM…FPVF), 89-109 (MSAV…NNID), 128-148 (FAIY…SIGI), 168-188 (LLSF…YTVV), 203-223 (FLAA…IVTF), and 232-252 (AMAT…VVLV).

The protein belongs to the UPF0761 family.

The protein resides in the cell inner membrane. This chain is UPF0761 membrane protein HI_0276, found in Haemophilus influenzae (strain ATCC 51907 / DSM 11121 / KW20 / Rd).